Consider the following 261-residue polypeptide: Precorrin-6A synthase [deacetylating] (261 aa).

The catalysed reaction is precorrin-5 + S-adenosyl-L-methionine + H2O = precorrin-6A + acetate + S-adenosyl-L-homocysteine + 2 H(+). It participates in cofactor biosynthesis; adenosylcobalamin biosynthesis; cob(II)yrinate a,c-diamide from precorrin-2 (aerobic route): step 5/10. In terms of biological role, catalyzes the methylation of C-1 in precorrin-5 and the subsequent extrusion of acetic acid from the resulting intermediate to form cobalt-precorrin-6A. The chain is Precorrin-6A synthase [deacetylating] (cobF) from Sinorhizobium sp.